The sequence spans 554 residues: Glucose-6-phosphate isomerase (554 aa).

Glu359 (proton donor) is an active-site residue. Active-site residues include His390 and Lys518.

This sequence belongs to the GPI family.

It is found in the cytoplasm. It carries out the reaction alpha-D-glucose 6-phosphate = beta-D-fructose 6-phosphate. It functions in the pathway carbohydrate biosynthesis; gluconeogenesis. It participates in carbohydrate degradation; glycolysis; D-glyceraldehyde 3-phosphate and glycerone phosphate from D-glucose: step 2/4. Functionally, catalyzes the reversible isomerization of glucose-6-phosphate to fructose-6-phosphate. The sequence is that of Glucose-6-phosphate isomerase from Pseudomonas aeruginosa (strain LESB58).